Consider the following 151-residue polypeptide: S-ribosylhomocysteine lyase (151 aa).

Fe cation is bound by residues His54, His58, and Cys121.

This sequence belongs to the LuxS family. Homodimer. Fe cation serves as cofactor.

It carries out the reaction S-(5-deoxy-D-ribos-5-yl)-L-homocysteine = (S)-4,5-dihydroxypentane-2,3-dione + L-homocysteine. In terms of biological role, involved in the synthesis of autoinducer 2 (AI-2) which is secreted by bacteria and is used to communicate both the cell density and the metabolic potential of the environment. The regulation of gene expression in response to changes in cell density is called quorum sensing. Catalyzes the transformation of S-ribosylhomocysteine (RHC) to homocysteine (HC) and 4,5-dihydroxy-2,3-pentadione (DPD). The protein is S-ribosylhomocysteine lyase of Clostridium botulinum (strain Alaska E43 / Type E3).